The primary structure comprises 243 residues: Carboxy-S-adenosyl-L-methionine synthase (243 aa).

Residues Tyr40, 65-67 (GCS), 90-91 (DN), 118-119 (DI), Asn133, and Arg200 contribute to the S-adenosyl-L-methionine site.

The protein belongs to the class I-like SAM-binding methyltransferase superfamily. Cx-SAM synthase family. In terms of assembly, homodimer.

It catalyses the reaction prephenate + S-adenosyl-L-methionine = carboxy-S-adenosyl-L-methionine + 3-phenylpyruvate + H2O. Functionally, catalyzes the conversion of S-adenosyl-L-methionine (SAM) to carboxy-S-adenosyl-L-methionine (Cx-SAM). This chain is Carboxy-S-adenosyl-L-methionine synthase, found in Shewanella oneidensis (strain ATCC 700550 / JCM 31522 / CIP 106686 / LMG 19005 / NCIMB 14063 / MR-1).